A 158-amino-acid chain; its full sequence is NADH-quinone oxidoreductase subunit B (158 aa).

Residues Cys-37, Cys-38, Cys-102, and Cys-132 each coordinate [4Fe-4S] cluster.

The protein belongs to the complex I 20 kDa subunit family. In terms of assembly, NDH-1 is composed of 14 different subunits. Subunits NuoB, C, D, E, F, and G constitute the peripheral sector of the complex. It depends on [4Fe-4S] cluster as a cofactor.

The protein localises to the cell inner membrane. It catalyses the reaction a quinone + NADH + 5 H(+)(in) = a quinol + NAD(+) + 4 H(+)(out). Its function is as follows. NDH-1 shuttles electrons from NADH, via FMN and iron-sulfur (Fe-S) centers, to quinones in the respiratory chain. Couples the redox reaction to proton translocation (for every two electrons transferred, four hydrogen ions are translocated across the cytoplasmic membrane), and thus conserves the redox energy in a proton gradient. The protein is NADH-quinone oxidoreductase subunit B of Leptothrix cholodnii (strain ATCC 51168 / LMG 8142 / SP-6) (Leptothrix discophora (strain SP-6)).